The sequence spans 1185 residues: Zinc finger SWIM domain-containing protein 5 (1185 aa).

A compositionally biased stretch (basic and acidic residues) spans 1-10 (MADGGEREEL). Disordered stretches follow at residues 1–45 (MADG…GGAG) and 123–153 (AGAA…GSAP). The SWIM-type zinc finger occupies 219-256 (YKVAISFDRCKITSVTCGCGNKDIFYCAHVVALSLYRI).

This is Zinc finger SWIM domain-containing protein 5 (ZSWIM5) from Homo sapiens (Human).